The primary structure comprises 327 residues: Methionyl-tRNA formyltransferase (327 aa).

121 to 124 (SLLP) lines the (6S)-5,6,7,8-tetrahydrofolate pocket.

The protein belongs to the Fmt family.

It catalyses the reaction L-methionyl-tRNA(fMet) + (6R)-10-formyltetrahydrofolate = N-formyl-L-methionyl-tRNA(fMet) + (6S)-5,6,7,8-tetrahydrofolate + H(+). Its function is as follows. Attaches a formyl group to the free amino group of methionyl-tRNA(fMet). The formyl group appears to play a dual role in the initiator identity of N-formylmethionyl-tRNA by promoting its recognition by IF2 and preventing the misappropriation of this tRNA by the elongation apparatus. The protein is Methionyl-tRNA formyltransferase of Burkholderia pseudomallei (strain K96243).